We begin with the raw amino-acid sequence, 130 residues long: Small ribosomal subunit protein uS9 (130 aa).

This sequence belongs to the universal ribosomal protein uS9 family.

This is Small ribosomal subunit protein uS9 from Geotalea uraniireducens (strain Rf4) (Geobacter uraniireducens).